The chain runs to 521 residues: Bifunctional purine biosynthesis protein PurH (521 aa).

Residues 1–147 (MAKITRALIS…KNNADVTVVV (147 aa)) enclose the MGS-like domain.

This sequence belongs to the PurH family.

It catalyses the reaction (6R)-10-formyltetrahydrofolate + 5-amino-1-(5-phospho-beta-D-ribosyl)imidazole-4-carboxamide = 5-formamido-1-(5-phospho-D-ribosyl)imidazole-4-carboxamide + (6S)-5,6,7,8-tetrahydrofolate. The catalysed reaction is IMP + H2O = 5-formamido-1-(5-phospho-D-ribosyl)imidazole-4-carboxamide. It functions in the pathway purine metabolism; IMP biosynthesis via de novo pathway; 5-formamido-1-(5-phospho-D-ribosyl)imidazole-4-carboxamide from 5-amino-1-(5-phospho-D-ribosyl)imidazole-4-carboxamide (10-formyl THF route): step 1/1. It participates in purine metabolism; IMP biosynthesis via de novo pathway; IMP from 5-formamido-1-(5-phospho-D-ribosyl)imidazole-4-carboxamide: step 1/1. The polypeptide is Bifunctional purine biosynthesis protein PurH (Geobacter metallireducens (strain ATCC 53774 / DSM 7210 / GS-15)).